A 340-amino-acid chain; its full sequence is Phosphoribosylformylglycinamidine cyclo-ligase (340 aa).

It belongs to the AIR synthase family.

The protein resides in the cytoplasm. The catalysed reaction is 2-formamido-N(1)-(5-O-phospho-beta-D-ribosyl)acetamidine + ATP = 5-amino-1-(5-phospho-beta-D-ribosyl)imidazole + ADP + phosphate + H(+). It participates in purine metabolism; IMP biosynthesis via de novo pathway; 5-amino-1-(5-phospho-D-ribosyl)imidazole from N(2)-formyl-N(1)-(5-phospho-D-ribosyl)glycinamide: step 2/2. The chain is Phosphoribosylformylglycinamidine cyclo-ligase from Streptococcus gordonii (strain Challis / ATCC 35105 / BCRC 15272 / CH1 / DL1 / V288).